The following is a 75-amino-acid chain: Translational regulator CsrA (75 aa).

It belongs to the CsrA/RsmA family. Homodimer; the beta-strands of each monomer intercalate to form a hydrophobic core, while the alpha-helices form wings that extend away from the core.

The protein localises to the cytoplasm. Its function is as follows. A translational regulator that binds mRNA to regulate translation initiation and/or mRNA stability. Usually binds in the 5'-UTR at or near the Shine-Dalgarno sequence preventing ribosome-binding, thus repressing translation. Its main target seems to be the major flagellin gene, while its function is anatagonized by FliW. The sequence is that of Translational regulator CsrA from Treponema denticola (strain ATCC 35405 / DSM 14222 / CIP 103919 / JCM 8153 / KCTC 15104).